The sequence spans 537 residues: 2-succinyl-5-enolpyruvyl-6-hydroxy-3-cyclohexene-1-carboxylate synthase (537 aa).

It belongs to the TPP enzyme family. MenD subfamily. As to quaternary structure, homodimer. Mg(2+) serves as cofactor. It depends on Mn(2+) as a cofactor. Thiamine diphosphate is required as a cofactor.

It carries out the reaction isochorismate + 2-oxoglutarate + H(+) = 5-enolpyruvoyl-6-hydroxy-2-succinyl-cyclohex-3-ene-1-carboxylate + CO2. It participates in quinol/quinone metabolism; 1,4-dihydroxy-2-naphthoate biosynthesis; 1,4-dihydroxy-2-naphthoate from chorismate: step 2/7. Its pathway is quinol/quinone metabolism; menaquinone biosynthesis. Catalyzes the thiamine diphosphate-dependent decarboxylation of 2-oxoglutarate and the subsequent addition of the resulting succinic semialdehyde-thiamine pyrophosphate anion to isochorismate to yield 2-succinyl-5-enolpyruvyl-6-hydroxy-3-cyclohexene-1-carboxylate (SEPHCHC). This Desulfotalea psychrophila (strain LSv54 / DSM 12343) protein is 2-succinyl-5-enolpyruvyl-6-hydroxy-3-cyclohexene-1-carboxylate synthase.